The sequence spans 622 residues: Chaperone protein HscA homolog (622 aa).

It belongs to the heat shock protein 70 family.

Chaperone involved in the maturation of iron-sulfur cluster-containing proteins. Has a low intrinsic ATPase activity which is markedly stimulated by HscB. This Methylobacillus flagellatus (strain ATCC 51484 / DSM 6875 / VKM B-1610 / KT) protein is Chaperone protein HscA homolog.